Reading from the N-terminus, the 77-residue chain is Conotoxin King-Kong 1 (77 aa).

The signal sequence occupies residues 1 to 22 (MKLTCMMIVAVLFLTAWTFATA). The propeptide occupies 23–49 (DDSSNGLENLFSKAHHEMKNPEASKLN). 3 disulfide bridges follow: Cys-52-Cys-67, Cys-59-Cys-71, and Cys-66-Cys-76. A Methionine sulfoxide; partial modification is found at Met-61.

It belongs to the conotoxin O1 superfamily. In terms of tissue distribution, expressed by the venom duct.

It localises to the secreted. This chain is Conotoxin King-Kong 1, found in Conus textile (Cloth-of-gold cone).